The chain runs to 763 residues: ATP-dependent RNA helicase SUV3 homolog, mitochondrial (763 aa).

Residues M1 to K43 constitute a mitochondrion transit peptide. In terms of domain architecture, Helicase ATP-binding spans N181–E321. Residue G194–T201 participates in ATP binding. Positions R330–A508 constitute a Helicase C-terminal domain. A disordered region spans residues A724–K763. Polar residues predominate over residues L727–V741.

This sequence belongs to the helicase family. It depends on Mg(2+) as a cofactor. Mn(2+) is required as a cofactor.

The protein localises to the mitochondrion. It catalyses the reaction ATP + H2O = ADP + phosphate + H(+). Major helicase player in mitochondrial RNA metabolism and maintenance. Likely component of the mitochondrial degradosome (mtEXO) complex, that degrades 3' overhang double-stranded RNA with a 3'-to-5' directionality in an ATP-dependent manner. ATPase and ATP-dependent multisubstrate helicase, able to unwind double-stranded (ds) DNA and RNA, and RNA/DNA heteroduplexes in the 5'-to-3' direction. Regulates mRNA stability and is required for the correct processing and maturation of mitochondrial transcripts. The sequence is that of ATP-dependent RNA helicase SUV3 homolog, mitochondrial from Drosophila melanogaster (Fruit fly).